Reading from the N-terminus, the 583-residue chain is Isocitrate dehydrogenase kinase/phosphatase (583 aa).

ATP-binding positions include 315–321 (APGIRGM) and lysine 336. Aspartate 371 is an active-site residue.

The protein belongs to the AceK family.

Its subcellular location is the cytoplasm. The enzyme catalyses L-seryl-[isocitrate dehydrogenase] + ATP = O-phospho-L-seryl-[isocitrate dehydrogenase] + ADP + H(+). Functionally, bifunctional enzyme which can phosphorylate or dephosphorylate isocitrate dehydrogenase (IDH) on a specific serine residue. This is a regulatory mechanism which enables bacteria to bypass the Krebs cycle via the glyoxylate shunt in response to the source of carbon. When bacteria are grown on glucose, IDH is fully active and unphosphorylated, but when grown on acetate or ethanol, the activity of IDH declines drastically concomitant with its phosphorylation. The polypeptide is Isocitrate dehydrogenase kinase/phosphatase (Salmonella gallinarum (strain 287/91 / NCTC 13346)).